Reading from the N-terminus, the 123-residue chain is MPTVNQLVRLGRKPQKKKTNVPALQACPQRRGVCTRVYTTTPKKPNSALRKVARVRLTNGHEVSAYIPGEGHNLQEHSVVLIRGGRVKDLPGVRYHILRGSLDTQGVKDRKQGRSKYGAKRPK.

Aspartate 89 bears the 3-methylthioaspartic acid mark. A disordered region spans residues 102-123; the sequence is LDTQGVKDRKQGRSKYGAKRPK. The segment covering 113 to 123 has biased composition (basic residues); sequence GRSKYGAKRPK.

Belongs to the universal ribosomal protein uS12 family. As to quaternary structure, part of the 30S ribosomal subunit. Contacts proteins S8 and S17. May interact with IF1 in the 30S initiation complex.

Functionally, with S4 and S5 plays an important role in translational accuracy. Its function is as follows. Interacts with and stabilizes bases of the 16S rRNA that are involved in tRNA selection in the A site and with the mRNA backbone. Located at the interface of the 30S and 50S subunits, it traverses the body of the 30S subunit contacting proteins on the other side and probably holding the rRNA structure together. The combined cluster of proteins S8, S12 and S17 appears to hold together the shoulder and platform of the 30S subunit. The sequence is that of Small ribosomal subunit protein uS12 from Magnetococcus marinus (strain ATCC BAA-1437 / JCM 17883 / MC-1).